An 84-amino-acid polypeptide reads, in one-letter code: Small ribosomal subunit protein bS16 (84 aa).

The protein belongs to the bacterial ribosomal protein bS16 family.

In Dechloromonas aromatica (strain RCB), this protein is Small ribosomal subunit protein bS16.